We begin with the raw amino-acid sequence, 157 residues long: UPF0262 protein RHECIAT_CH0000657 (157 aa).

Belongs to the UPF0262 family.

In Rhizobium etli (strain CIAT 652), this protein is UPF0262 protein RHECIAT_CH0000657.